We begin with the raw amino-acid sequence, 315 residues long: MHIKLANPRGFCAGVDRAIEIVNRALEVFGPPIYVRHEVVHNKFVVDDLRSRGAIFVEELDQVPDNVIVIFSAHGVSQAVRQEAARRGLKVFDATCPLVTKVHMEVARYSREGRECILIGHQGHPEVVGTMGQYDTANGGAIYLVEDEEDVARLQVRNPVSLAFVTQTTLSMDDAARMIDALRARFPGIGGPRRDDICYATQNRQDAVRQLAGECQLVLVVGSSSSSNSNRLRELAESIGVPAYLVDGAQDLRREWFDGIRRVGVTAGASAPEVLVRDVIDRLRQWGVVNVEELTGREENITFSIPKELRVVSSD.

Residue C12 coordinates [4Fe-4S] cluster. (2E)-4-hydroxy-3-methylbut-2-enyl diphosphate-binding residues include H41 and H74. Dimethylallyl diphosphate-binding residues include H41 and H74. Residues H41 and H74 each contribute to the isopentenyl diphosphate site. A [4Fe-4S] cluster-binding site is contributed by C96. A (2E)-4-hydroxy-3-methylbut-2-enyl diphosphate-binding site is contributed by H124. Position 124 (H124) interacts with dimethylallyl diphosphate. H124 serves as a coordination point for isopentenyl diphosphate. Catalysis depends on E126, which acts as the Proton donor. Residue T168 participates in (2E)-4-hydroxy-3-methylbut-2-enyl diphosphate binding. C198 contributes to the [4Fe-4S] cluster binding site. 4 residues coordinate (2E)-4-hydroxy-3-methylbut-2-enyl diphosphate: S226, S227, N228, and S270. Dimethylallyl diphosphate contacts are provided by S226, S227, N228, and S270. 4 residues coordinate isopentenyl diphosphate: S226, S227, N228, and S270.

The protein belongs to the IspH family. Requires [4Fe-4S] cluster as cofactor.

It carries out the reaction isopentenyl diphosphate + 2 oxidized [2Fe-2S]-[ferredoxin] + H2O = (2E)-4-hydroxy-3-methylbut-2-enyl diphosphate + 2 reduced [2Fe-2S]-[ferredoxin] + 2 H(+). It catalyses the reaction dimethylallyl diphosphate + 2 oxidized [2Fe-2S]-[ferredoxin] + H2O = (2E)-4-hydroxy-3-methylbut-2-enyl diphosphate + 2 reduced [2Fe-2S]-[ferredoxin] + 2 H(+). Its pathway is isoprenoid biosynthesis; dimethylallyl diphosphate biosynthesis; dimethylallyl diphosphate from (2E)-4-hydroxy-3-methylbutenyl diphosphate: step 1/1. It participates in isoprenoid biosynthesis; isopentenyl diphosphate biosynthesis via DXP pathway; isopentenyl diphosphate from 1-deoxy-D-xylulose 5-phosphate: step 6/6. Its function is as follows. Catalyzes the conversion of 1-hydroxy-2-methyl-2-(E)-butenyl 4-diphosphate (HMBPP) into a mixture of isopentenyl diphosphate (IPP) and dimethylallyl diphosphate (DMAPP). Acts in the terminal step of the DOXP/MEP pathway for isoprenoid precursor biosynthesis. In Azotobacter vinelandii (strain DJ / ATCC BAA-1303), this protein is 4-hydroxy-3-methylbut-2-enyl diphosphate reductase.